Consider the following 191-residue polypeptide: Orotate phosphoribosyltransferase (191 aa).

116–124 contributes to the 5-phospho-alpha-D-ribose 1-diphosphate binding site; sequence EDVVTTGGS. Residues threonine 120 and arginine 148 each coordinate orotate.

Belongs to the purine/pyrimidine phosphoribosyltransferase family. PyrE subfamily. In terms of assembly, homodimer. Mg(2+) is required as a cofactor.

The catalysed reaction is orotidine 5'-phosphate + diphosphate = orotate + 5-phospho-alpha-D-ribose 1-diphosphate. It functions in the pathway pyrimidine metabolism; UMP biosynthesis via de novo pathway; UMP from orotate: step 1/2. Functionally, catalyzes the transfer of a ribosyl phosphate group from 5-phosphoribose 1-diphosphate to orotate, leading to the formation of orotidine monophosphate (OMP). In Carboxydothermus hydrogenoformans (strain ATCC BAA-161 / DSM 6008 / Z-2901), this protein is Orotate phosphoribosyltransferase.